The following is a 596-amino-acid chain: Aspartate--tRNA(Asp/Asn) ligase (596 aa).

Glu175 is an L-aspartate binding site. An aspartate region spans residues 199-202 (QQYK). The L-aspartate site is built by Arg221 and His454. Position 221–223 (221–223 (RDE)) interacts with ATP. Glu488 provides a ligand contact to ATP. Arg495 is an L-aspartate binding site. Residue 540–543 (GIDR) coordinates ATP.

This sequence belongs to the class-II aminoacyl-tRNA synthetase family. Type 1 subfamily. In terms of assembly, homodimer.

The protein localises to the cytoplasm. The catalysed reaction is tRNA(Asx) + L-aspartate + ATP = L-aspartyl-tRNA(Asx) + AMP + diphosphate. In terms of biological role, aspartyl-tRNA synthetase with relaxed tRNA specificity since it is able to aspartylate not only its cognate tRNA(Asp) but also tRNA(Asn). Reaction proceeds in two steps: L-aspartate is first activated by ATP to form Asp-AMP and then transferred to the acceptor end of tRNA(Asp/Asn). The polypeptide is Aspartate--tRNA(Asp/Asn) ligase (Rhizobium rhizogenes (strain K84 / ATCC BAA-868) (Agrobacterium radiobacter)).